A 343-amino-acid chain; its full sequence is Methylthioribose-1-phosphate isomerase (343 aa).

Substrate contacts are provided by residues 48–50 (RGA), arginine 88, and glutamine 193. Aspartate 234 functions as the Proton donor in the catalytic mechanism. 244–245 (NK) contributes to the substrate binding site.

Belongs to the eIF-2B alpha/beta/delta subunits family. MtnA subfamily.

The enzyme catalyses 5-(methylsulfanyl)-alpha-D-ribose 1-phosphate = 5-(methylsulfanyl)-D-ribulose 1-phosphate. It functions in the pathway amino-acid biosynthesis; L-methionine biosynthesis via salvage pathway; L-methionine from S-methyl-5-thio-alpha-D-ribose 1-phosphate: step 1/6. Its function is as follows. Catalyzes the interconversion of methylthioribose-1-phosphate (MTR-1-P) into methylthioribulose-1-phosphate (MTRu-1-P). The protein is Methylthioribose-1-phosphate isomerase of Thermotoga neapolitana (strain ATCC 49049 / DSM 4359 / NBRC 107923 / NS-E).